A 132-amino-acid polypeptide reads, in one-letter code: Small ribosomal subunit protein uS8 (132 aa).

This sequence belongs to the universal ribosomal protein uS8 family. As to quaternary structure, part of the 30S ribosomal subunit. Contacts proteins S5 and S12.

Its function is as follows. One of the primary rRNA binding proteins, it binds directly to 16S rRNA central domain where it helps coordinate assembly of the platform of the 30S subunit. The sequence is that of Small ribosomal subunit protein uS8 from Streptococcus pneumoniae serotype 19F (strain G54).